A 315-amino-acid polypeptide reads, in one-letter code: Homocysteine S-methyltransferase YbgG (315 aa).

The region spanning 2–309 is the Hcy-binding domain; sequence NPIQHILDTY…ENIQEIAAWA (308 aa). 3 residues coordinate Zn(2+): Cys229, Cys294, and Cys295.

It depends on Zn(2+) as a cofactor.

The enzyme catalyses S-methyl-L-methionine + L-homocysteine = 2 L-methionine + H(+). This Bacillus subtilis (strain 168) protein is Homocysteine S-methyltransferase YbgG (ybgG).